Consider the following 535-residue polypeptide: Sucrose transport protein SUT5 (535 aa).

Topologically, residues 1–53 (MEEGRRGDREGKSAAGWTALSTTKTTLEEKRRLQANGSVGGDAGTSGFRRIVR) are cytoplasmic. Residues 54-74 (LFFACMVAGGIQYGWALQLSL) form a helical membrane-spanning segment. The Extracellular segment spans residues 75–87 (LSPYSQTLGISHS). The helical transmembrane segment at 88 to 108 (YVSLTWICGPIAGFVVQPIVG) threads the bilayer. The Cytoplasmic portion of the chain corresponds to 109 to 122 (YYSDRCTMKMGRRR). A helical transmembrane segment spans residues 123–143 (PFILVGCLIICISVMIIGFSA). Residues 144-163 (DIGRHLGDTKEHCSTYTGPR) lie on the Extracellular side of the membrane. Residues 164–184 (WSAAMVYIVGFWFLDFANNTV) form a helical membrane-spanning segment. Topologically, residues 185–203 (QGPARAMMADLSAGHHGPN) are cytoplasmic. A helical transmembrane segment spans residues 204–224 (VGQSIFSLWMAIGSVLGYLSG). At 225 to 249 (ANGKWHEWFPWLKTAACCDACANLK) the chain is on the extracellular side. The chain crosses the membrane as a helical span at residues 250 to 270 (GAFFTAVLLIVVSMTVTMYLA). The Cytoplasmic portion of the chain corresponds to 271-302 (DEMPLDKQDVDTSGGGGCAVFVDLFKSLRNLP). Residues 303 to 323 (PAMFKVLAVTAVTWLSWFPFI) form a helical membrane-spanning segment. Over 324–354 (QYNTDWMGREIYHGEPQGTAAKADVYDAGVR) the chain is Extracellular. Residues 355–375 (EGAMGLLFCSVALGVTSFVIP) traverse the membrane as a helical segment. At 376–384 (KLCRRLTSK) the chain is on the cytoplasmic side. The chain crosses the membrane as a helical span at residues 385–405 (VVWSISNFLVFALMAVMVAVG). The Extracellular portion of the chain corresponds to 406–429 (MVSMRGYRPSLAAGLTGPDPTLKA). A helical membrane pass occupies residues 430–450 (VALVVFALIGIPQAVLFSVPW). Topologically, residues 451–465 (AVASEVTAEEGGGQG) are cytoplasmic. The helical transmembrane segment at 466 to 486 (LAIGVLNIAIVVPQLVIALTA) threads the bilayer. The Extracellular segment spans residues 487–498 (GPIDGAFNKGNT). Residues 499-519 (PAFGIGGAFAFICGVLALIWL) traverse the membrane as a helical segment. Residues 520 to 535 (PKTRGVSNAAVVAGGH) lie on the Cytoplasmic side of the membrane.

Belongs to the glycoside-pentoside-hexuronide (GPH) cation symporter transporter (TC 2.A.2.4) family. Homodimer. Widely expressed. Highest expression in sink leaves and lowest in germinating seeds.

The protein resides in the cell membrane. It functions in the pathway glycan biosynthesis; sucrose metabolism. Responsible for the transport of sucrose into the cell, with the concomitant uptake of protons (symport system). Can also transport other glucosides such as maltose, arbutin, salicin, helicin, alpha-phenylglucoside and beta-phenylglucoside. This is Sucrose transport protein SUT5 (SUT5) from Oryza sativa subsp. japonica (Rice).